A 340-amino-acid chain; its full sequence is S-adenosylmethionine:tRNA ribosyltransferase-isomerase (340 aa).

The protein belongs to the QueA family. As to quaternary structure, monomer.

It localises to the cytoplasm. The catalysed reaction is 7-aminomethyl-7-carbaguanosine(34) in tRNA + S-adenosyl-L-methionine = epoxyqueuosine(34) in tRNA + adenine + L-methionine + 2 H(+). Its pathway is tRNA modification; tRNA-queuosine biosynthesis. Transfers and isomerizes the ribose moiety from AdoMet to the 7-aminomethyl group of 7-deazaguanine (preQ1-tRNA) to give epoxyqueuosine (oQ-tRNA). The polypeptide is S-adenosylmethionine:tRNA ribosyltransferase-isomerase (Francisella tularensis subsp. tularensis (strain FSC 198)).